Reading from the N-terminus, the 182-residue chain is Putative manganese efflux pump MntP (182 aa).

The next 6 helical transmembrane spans lie at 6-26 (LIPL…VSLG), 37-57 (ILYI…IGMV), 71-91 (HFAG…SSIL), 101-121 (IGIS…SVGL), 131-151 (IITI…GLFI), and 162-182 (YGEI…LFPI).

This sequence belongs to the MntP (TC 9.B.29) family.

Its subcellular location is the cell membrane. Its function is as follows. Probably functions as a manganese efflux pump. The sequence is that of Putative manganese efflux pump MntP from Bacillus cereus (strain ATCC 10987 / NRS 248).